The following is a 1075-amino-acid chain: Putative type I restriction enzyme MjaVIIP endonuclease subunit (1075 aa).

The protein belongs to the HsdR family. The type I restriction/modification system is composed of three polypeptides R, M and S.

The enzyme catalyses Endonucleolytic cleavage of DNA to give random double-stranded fragments with terminal 5'-phosphates, ATP is simultaneously hydrolyzed.. The restriction (R) subunit of a type I restriction enzyme that recognizes 5'-CAAN(7)TGG-3' and cleaves a random distance away. The R subunit is required for both endonuclease and ATPase activities but not for modification. After locating a non-methylated recognition site, the enzyme complex serves as a molecular motor that translocates DNA in an ATP-dependent manner until a collision occurs that triggers cleavage. In Methanocaldococcus jannaschii (strain ATCC 43067 / DSM 2661 / JAL-1 / JCM 10045 / NBRC 100440) (Methanococcus jannaschii), this protein is Putative type I restriction enzyme MjaVIIP endonuclease subunit.